The chain runs to 113 residues: Stigma/stylar cysteine-rich adhesin (113 aa).

Positions 1 to 22 (MARSSAVCFLLLLAFLIGTASA) are cleaved as a signal peptide. Intrachain disulfides connect cysteine 25-cysteine 72, cysteine 35-cysteine 49, cysteine 50-cysteine 95, and cysteine 70-cysteine 109.

It belongs to the plant LTP family. In terms of tissue distribution, highly expressed in style and stigma, abundant in young leaves and petals, and low expression in young anthers at pollen mother cell stage with an active tapetum. Not expressed in mature leaves or in pollen grains or tubes. Found in the stylar transmitting tract epidermis and in the stylar extracellular matrix.

Its function is as follows. Acts as an adhesive agent between the pollen tube wall and the stylar transmitting tract epidermis. Binds a stylar pectin in a pH-dependent manner. Enhances activity of chemocyanin, a diffusible chemotropic factor. In Lilium longiflorum (Trumpet lily), this protein is Stigma/stylar cysteine-rich adhesin (SCA).